Reading from the N-terminus, the 298-residue chain is uncharacterized protein (298 aa).

The next 10 membrane-spanning stretches (helical) occupy residues 5–25 (ILFG…MSAF), 36–56 (MENV…IYPF), 76–96 (VVVG…ISLA), 97–117 (TATA…PLLL), 124–144 (STLI…DPSV), 147–167 (VGPV…LAYI), 181–201 (VILA…FIDI), 216–236 (ILWI…LTYA), 244–264 (IIAP…LYLG), and 272–292 (SSLG…PALL). The EamA 1 domain maps to 17–141 (LCFGIMSAFV…GIVGVVLISD (125 aa)). Residues 183–288 (LAFAFGMSLL…ILCSGLLIAL (106 aa)) form the EamA 2 domain.

This sequence belongs to the EamA transporter family.

Its subcellular location is the cell membrane. This is an uncharacterized protein from Helicobacter pylori (strain ATCC 700392 / 26695) (Campylobacter pylori).